Reading from the N-terminus, the 181-residue chain is Protein Syd (181 aa).

This sequence belongs to the Syd family.

It localises to the cell inner membrane. Interacts with the SecY protein in vivo. May bind preferentially to an uncomplexed state of SecY, thus functioning either as a chelating agent for excess SecY in the cell or as a regulatory factor that negatively controls the translocase function. The chain is Protein Syd from Salmonella agona (strain SL483).